Reading from the N-terminus, the 510-residue chain is Membrane-bound transcription factor site-2 protease (510 aa).

The Cytoplasmic segment spans residues 1-3 (MIP). A helical membrane pass occupies residues 4 to 24 (VSLVVVVVGGWTAVYLADLVL). Residues 25-74 (KSSVYFKHSYEDWLEKNGLSISPFHIRWQTSVFNRAFYSWGRRKARMLYQ) are Lumenal-facing. 2 helical membrane-spanning segments follow: residues 75–95 (WFNF…FLLG) and 96–107 (KTLMQTLAQMMA). At 108–135 (DSPSSSSSSSSSSSSSSSSSIHNEQVLQ) the chain is on the lumenal side. The chain crosses the membrane as a helical span at residues 136–160 (VVVPGINLPVNQLTYFFAAVLISGV). His162 lines the Zn(2+) pocket. Glu163 is an active-site residue. The next 3 membrane-spanning stretches (helical) occupy residues 165-177 (GHGI…QVRF), 178-200 (NGFG…TTHL), and 220-242 (FVLA…PFYY). His166 lines the Zn(2+) pocket. Topologically, residues 243–437 (TGVGVLITEV…LPVIVETFVK (195 aa)) are lumenal. Asn328 carries an N-linked (GlcNAc...) asparagine glycan. 2 consecutive transmembrane segments (helical) span residues 438–455 (YLIS…VPCF) and 456–467 (ALDGQWILNSFL). At 468 to 483 (DATLTSVIGDNDVKDL) the chain is on the lumenal side. A helical transmembrane segment spans residues 484–504 (IGFFILLGGSVLLAANVTLGL). Residues 505-510 (WMVTAR) are Cytoplasmic-facing.

Belongs to the peptidase M50A family. Zn(2+) serves as cofactor.

Its subcellular location is the membrane. The protein resides in the cytoplasm. It is found in the golgi apparatus membrane. It carries out the reaction Cleaves several transcription factors that are type-2 transmembrane proteins within membrane-spanning domains. Known substrates include sterol regulatory element-binding protein (SREBP) -1, SREBP-2 and forms of the transcriptional activator ATF6. SREBP-2 is cleaved at the site 477-DRSRILL-|-CVLTFLCLSFNPLTSLLQWGGA-505. The residues Asn-Pro, 11 residues distal to the site of cleavage in the membrane-spanning domain, are important for cleavage by S2P endopeptidase. Replacement of either of these residues does not prevent cleavage, but there is no cleavage if both of these residues are replaced.. In terms of biological role, zinc metalloprotease that mediates intramembrane proteolysis of proteins such as ATF6, ATF6B, SREBF1/SREBP1 and SREBF2/SREBP2. Catalyzes the second step in the proteolytic activation of the sterol regulatory element-binding proteins (SREBPs) SREBF1/SREBP1 and SREBF2/SREBP2: cleaves SREBPs within the first transmembrane segment, thereby releasing the N-terminal segment with a portion of the transmembrane segment attached. Mature N-terminal SREBP fragments shuttle to the nucleus and activate gene transcription. Also mediates the second step in the proteolytic activation of the cyclic AMP-dependent transcription factor ATF-6 (ATF6 and ATF6B). Involved in intramembrane proteolysis during bone formation. In astrocytes and osteoblasts, upon DNA damage and ER stress, mediates the second step of the regulated intramembrane proteolytic activation of the transcription factor CREB3L1, leading to the inhibition of cell-cycle progression. The sequence is that of Membrane-bound transcription factor site-2 protease (MBTPS2) from Cricetulus griseus (Chinese hamster).